We begin with the raw amino-acid sequence, 394 residues long: Elongation factor Tu (394 aa).

Residues 10 to 204 (KPHVNVGTIG…ALDNYIPEPE (195 aa)) enclose the tr-type G domain. Residues 19–26 (GHVDHGKT) form a G1 region. Residue 19–26 (GHVDHGKT) participates in GTP binding. Thr-26 contacts Mg(2+). Residues 60–64 (GITIS) are G2. The interval 81–84 (DCPG) is G3. GTP is bound by residues 81–85 (DCPGH) and 136–139 (NKCD). Positions 136-139 (NKCD) are G4. The tract at residues 174 to 176 (SAL) is G5.

The protein belongs to the TRAFAC class translation factor GTPase superfamily. Classic translation factor GTPase family. EF-Tu/EF-1A subfamily. In terms of assembly, monomer.

It is found in the cytoplasm. It catalyses the reaction GTP + H2O = GDP + phosphate + H(+). In terms of biological role, GTP hydrolase that promotes the GTP-dependent binding of aminoacyl-tRNA to the A-site of ribosomes during protein biosynthesis. The polypeptide is Elongation factor Tu (Idiomarina loihiensis (strain ATCC BAA-735 / DSM 15497 / L2-TR)).